A 556-amino-acid chain; its full sequence is Endoplasmic reticulum membrane protein 65 (556 aa).

Residues 1 to 87 (MQHKDTAVAK…IRIPMFLEKF (87 aa)) lie on the Cytoplasmic side of the membrane. S22 carries the post-translational modification Phosphoserine. Residues 88–108 (MLFALLTSLDCFLYYFTVLPI) form a helical membrane-spanning segment. At 109 to 151 (RLIKGYVKQFKSYRQHYRLQQRSGHKNKIPFRYRITSREYKER) the chain is on the lumenal side. A helical membrane pass occupies residues 152–172 (CMIFIIVISSILLSKLDTSKL). The Cytoplasmic segment spans residues 173-224 (YHRIKRQSTMKLYMLFSVLEMADKMLASLGQSLLTVMLSRKNSERILLHKCL). The helical transmembrane segment at 225 to 245 (LVSMSLTYVTIHGYVLVYQAI) threads the bilayer. At 246–330 (SLNIAVNSYS…INFWSPRSTL (85 aa)) the chain is on the lumenal side. N-linked (GlcNAc...) asparagine glycosylation is present at N318. A helical transmembrane segment spans residues 331-351 (SIVINILCGPMVSVVGSEVLV). The Cytoplasmic portion of the chain corresponds to 352-391 (DWAKHAYITKFNRIRPQIYDKFYYIIYKDYSTRTHKLEDR). The helical transmembrane segment at 392–412 (LGLPLPAFVVLFIVMVRPTLF) threads the bilayer. The Lumenal portion of the chain corresponds to 413–428 (KSSEPSYLPSLFRILF). A helical membrane pass occupies residues 429–449 (MGASVFLLALLAKFTLDLILI). The Cytoplasmic portion of the chain corresponds to 450 to 556 (KWSKRIEQRF…RYKMVSKRIW (107 aa)).

This sequence belongs to the TAPT1 family. In terms of assembly, interacts with SLP1.

It is found in the endoplasmic reticulum membrane. The protein localises to the mitochondrion. Its function is as follows. May be involved in membrane protein folding. This chain is Endoplasmic reticulum membrane protein 65, found in Saccharomyces cerevisiae (strain ATCC 204508 / S288c) (Baker's yeast).